The chain runs to 467 residues: Methylenetetrahydrofolate--tRNA-(uracil-5-)-methyltransferase TrmFO (467 aa).

Gly11–Gly16 is a binding site for FAD.

This sequence belongs to the MnmG family. TrmFO subfamily. The cofactor is FAD.

It localises to the cytoplasm. It catalyses the reaction uridine(54) in tRNA + (6R)-5,10-methylene-5,6,7,8-tetrahydrofolate + NADH + H(+) = 5-methyluridine(54) in tRNA + (6S)-5,6,7,8-tetrahydrofolate + NAD(+). The catalysed reaction is uridine(54) in tRNA + (6R)-5,10-methylene-5,6,7,8-tetrahydrofolate + NADPH + H(+) = 5-methyluridine(54) in tRNA + (6S)-5,6,7,8-tetrahydrofolate + NADP(+). Its function is as follows. Catalyzes the folate-dependent formation of 5-methyl-uridine at position 54 (M-5-U54) in all tRNAs. In Prochlorococcus marinus (strain MIT 9303), this protein is Methylenetetrahydrofolate--tRNA-(uracil-5-)-methyltransferase TrmFO.